Consider the following 114-residue polypeptide: Hydrogenase maturation factor HypA (114 aa).

A Ni(2+)-binding site is contributed by His2. Residues Cys73, Cys76, Cys89, and Cys92 each coordinate Zn(2+).

This sequence belongs to the HypA/HybF family.

Involved in the maturation of [NiFe] hydrogenases. Required for nickel insertion into the metal center of the hydrogenase. The protein is Hydrogenase maturation factor HypA of Psychromonas ingrahamii (strain DSM 17664 / CCUG 51855 / 37).